Reading from the N-terminus, the 155-residue chain is Transcription antitermination protein NusB (155 aa).

It belongs to the NusB family.

Functionally, involved in transcription antitermination. Required for transcription of ribosomal RNA (rRNA) genes. Binds specifically to the boxA antiterminator sequence of the ribosomal RNA (rrn) operons. The sequence is that of Transcription antitermination protein NusB from Azoarcus sp. (strain BH72).